A 221-amino-acid chain; its full sequence is Tetraspanin-2 (221 aa).

Residues 1 to 13 are Cytoplasmic-facing; it reads MGRFRGGLRCIKY. The chain crosses the membrane as a helical span at residues 14-34; it reads LLLGFNLLFWLAGSAVIAFGL. Topologically, residues 35 to 54 are extracellular; that stretch reads WFRFGGTIKDLSSEEKSPEY. A helical membrane pass occupies residues 55–75; the sequence is FYVGLYVLVGAGALMMAVGFF. The Cytoplasmic segment spans residues 76–90; sequence GCCGAMRESQCVLGS. A helical transmembrane segment spans residues 91 to 111; it reads FFTCLLVIFAAEVTTGVFAFI. At 112–188 the chain is on the extracellular side; sequence GKDVAIRHVQ…ETIISVKLQL (77 aa). The N-linked (GlcNAc...) asparagine glycan is linked to Asn139. Residues 189–209 form a helical membrane-spanning segment; that stretch reads IGIVGIGIAGLTIFGMIFSMV. The Cytoplasmic portion of the chain corresponds to 210–221; that stretch reads LCCAIRNSRDVI.

It belongs to the tetraspanin (TM4SF) family. In terms of tissue distribution, expression is restricted to the nervous system.

The protein resides in the membrane. Its function is as follows. May play a role in signalling in oligodendrocytes in the early stages of their terminal differentiation into myelin-forming glia and may also function in stabilizing the mature sheath. The protein is Tetraspanin-2 (Tspan2) of Rattus norvegicus (Rat).